The primary structure comprises 483 residues: Glutamyl-tRNA(Gln) amidotransferase subunit A (483 aa).

Active-site charge relay system residues include lysine 76 and serine 151. Serine 175 (acyl-ester intermediate) is an active-site residue.

The protein belongs to the amidase family. GatA subfamily. As to quaternary structure, heterotrimer of A, B and C subunits.

It carries out the reaction L-glutamyl-tRNA(Gln) + L-glutamine + ATP + H2O = L-glutaminyl-tRNA(Gln) + L-glutamate + ADP + phosphate + H(+). Functionally, allows the formation of correctly charged Gln-tRNA(Gln) through the transamidation of misacylated Glu-tRNA(Gln) in organisms which lack glutaminyl-tRNA synthetase. The reaction takes place in the presence of glutamine and ATP through an activated gamma-phospho-Glu-tRNA(Gln). This chain is Glutamyl-tRNA(Gln) amidotransferase subunit A, found in Pseudomonas fluorescens (strain Pf0-1).